We begin with the raw amino-acid sequence, 282 residues long: 2-dehydro-3-deoxyphosphooctonate aldolase (282 aa).

The protein belongs to the KdsA family.

The protein localises to the cytoplasm. The enzyme catalyses D-arabinose 5-phosphate + phosphoenolpyruvate + H2O = 3-deoxy-alpha-D-manno-2-octulosonate-8-phosphate + phosphate. It functions in the pathway carbohydrate biosynthesis; 3-deoxy-D-manno-octulosonate biosynthesis; 3-deoxy-D-manno-octulosonate from D-ribulose 5-phosphate: step 2/3. It participates in bacterial outer membrane biogenesis; lipopolysaccharide biosynthesis. The sequence is that of 2-dehydro-3-deoxyphosphooctonate aldolase from Shewanella sp. (strain ANA-3).